We begin with the raw amino-acid sequence, 288 residues long: Polyamine aminopropyltransferase (288 aa).

The PABS domain maps to 9–242 (SEWLDEYHQG…GLWSWTFASM (234 aa)). Glutamine 36 contributes to the S-methyl-5'-thioadenosine binding site. Residues histidine 67 and aspartate 91 each contribute to the spermidine site. S-methyl-5'-thioadenosine-binding positions include glutamate 111 and 143 to 144 (NG). Aspartate 162 serves as the catalytic Proton acceptor. Proline 169 is an S-methyl-5'-thioadenosine binding site.

Belongs to the spermidine/spermine synthase family. As to quaternary structure, homodimer or homotetramer.

Its subcellular location is the cytoplasm. It carries out the reaction S-adenosyl 3-(methylsulfanyl)propylamine + putrescine = S-methyl-5'-thioadenosine + spermidine + H(+). Its pathway is amine and polyamine biosynthesis; spermidine biosynthesis; spermidine from putrescine: step 1/1. In terms of biological role, catalyzes the irreversible transfer of a propylamine group from the amino donor S-adenosylmethioninamine (decarboxy-AdoMet) to putrescine (1,4-diaminobutane) to yield spermidine. The polypeptide is Polyamine aminopropyltransferase (Prochlorococcus marinus (strain NATL2A)).